A 111-amino-acid chain; its full sequence is Cell division protein FtsB (111 aa).

Residues 1–3 lie on the Cytoplasmic side of the membrane; it reads MRL. A helical transmembrane segment spans residues 4-21; sequence ITLFLLLLLLAIQYPLWL. The Periplasmic segment spans residues 22–111; sequence GKGGWLRVWD…PPPAGQQAHH (90 aa). The stretch at 31-64 forms a coiled coil; that stretch reads DMQKQVTAQNQRNAELKQRNTKLEGEVKDLKEGT. The segment at 89–111 is disordered; the sequence is APAPKTSETPLPPPPPAGQQAHH.

Belongs to the FtsB family. In terms of assembly, part of a complex composed of FtsB, FtsL and FtsQ.

Its subcellular location is the cell inner membrane. In terms of biological role, essential cell division protein. May link together the upstream cell division proteins, which are predominantly cytoplasmic, with the downstream cell division proteins, which are predominantly periplasmic. The protein is Cell division protein FtsB of Ralstonia pickettii (strain 12J).